The primary structure comprises 165 residues: Endoribonuclease YbeY (165 aa).

3 residues coordinate Zn(2+): His130, His134, and His140.

Belongs to the endoribonuclease YbeY family. It depends on Zn(2+) as a cofactor.

It is found in the cytoplasm. Single strand-specific metallo-endoribonuclease involved in late-stage 70S ribosome quality control and in maturation of the 3' terminus of the 16S rRNA. The polypeptide is Endoribonuclease YbeY (Streptococcus pneumoniae serotype 2 (strain D39 / NCTC 7466)).